Reading from the N-terminus, the 192-residue chain is Soluble inorganic pyrophosphatase 2 (192 aa).

Residues Lys-38, Arg-52, and Tyr-64 each coordinate substrate. The Mg(2+) site is built by Asp-74, Asp-79, and Asp-111. Tyr-148 contacts substrate.

As to quaternary structure, monomer. It depends on Mg(2+) as a cofactor. In terms of processing, the N-terminus is blocked.

The protein resides in the mitochondrion. The catalysed reaction is diphosphate + H2O = 2 phosphate + H(+). This chain is Soluble inorganic pyrophosphatase 2 (ppa2), found in Chlamydomonas reinhardtii (Chlamydomonas smithii).